The chain runs to 806 residues: Phosphatidylinositol 4-kinase beta (806 aa).

The 193-residue stretch at L55 to S247 folds into the PIK helical domain. Disordered stretches follow at residues L69–R104 and A253–V310. The span at D283–K302 shows a compositional bias: polar residues. Positions E525–T791 constitute a PI3K/PI4K catalytic domain. Residues V531–G537 are G-loop. Residues Q658–N666 are catalytic loop. The activation loop stretch occupies residues H677–T701.

It belongs to the PI3/PI4-kinase family. Type III PI4K subfamily. It depends on Mg(2+) as a cofactor. The cofactor is Mn(2+).

It is found in the endomembrane system. The protein resides in the mitochondrion outer membrane. It localises to the rough endoplasmic reticulum membrane. The catalysed reaction is a 1,2-diacyl-sn-glycero-3-phospho-(1D-myo-inositol) + ATP = a 1,2-diacyl-sn-glycero-3-phospho-(1D-myo-inositol 4-phosphate) + ADP + H(+). In terms of biological role, phosphorylates phosphatidylinositol (PI) in the first committed step in the production of the second messenger inositol-1,4,5,-trisphosphate (PIP). May play an important role in the inner ear development. This is Phosphatidylinositol 4-kinase beta (pi4kb) from Xenopus tropicalis (Western clawed frog).